A 56-amino-acid polypeptide reads, in one-letter code: Protein hunchback (56 aa).

C2H2-type zinc fingers lie at residues 1-5, 11-33, and 39-56; these read HLRNH, FRCDKCDYQCVNKSMLNSHLKSH, and YRCADCTYATKYCHSLKL.

Belongs to the hunchback C2H2-type zinc-finger protein family.

It is found in the nucleus. In terms of biological role, gap class segmentation protein that controls development of head structures. In Locusta migratoria (Migratory locust), this protein is Protein hunchback (hb).